Here is a 370-residue protein sequence, read N- to C-terminus: Platelet-derived growth factor D (370 aa).

A signal peptide spans 1-18 (MHRLIFVYTLICANFCSC). The 119-residue stretch at 52 to 170 (RDETIQVKGN…PGFKIYYSLL (119 aa)) folds into the CUB domain. A disulfide bridge links C109 with C131. An N-linked (GlcNAc...) asparagine glycan is attached at N276. Disulfide bonds link C302/C360 and C306/C362.

This sequence belongs to the PDGF/VEGF growth factor family. As to quaternary structure, homodimer; disulfide-linked. Interacts with PDGFRB homodimers, and with heterodimers formed by PDGFRA and PDGFRB. Activated by proteolytic cleavage. Proteolytic removal of the N-terminal CUB domain releasing the core domain is necessary for unmasking the receptor-binding epitopes of the core domain. Cleavage after Arg-247 or Arg-249 by urokinase plasminogen activator gives rise to the active form. In terms of tissue distribution, expressed at high levels in the heart, pancreas, adrenal gland and ovary and at low levels in placenta, liver, kidney, prostate, testis, small intestine, spleen and colon. In the kidney, expressed by the visceral epithelial cells of the glomeruli. A widespread expression is also seen in the medial smooth muscle cells of arteries and arterioles, as well as in smooth muscle cells of vasa rectae in the medullary area. Expressed in the adventitial connective tissue surrounding the suprarenal artery. In chronic obstructive nephropathy, a persistent expression is seen in glomerular visceral epithelial cells and vascular smooth muscle cells, as well as de novo expression by periglomerular interstitial cells and by some neointimal cells of atherosclerotic vessels. Expression in normal prostate is seen preferentially in the mesenchyme of the gland while expression is increased and more profuse in prostate carcinoma. Expressed in many ovarian, lung, renal and brain cancer-derived cell lines.

It is found in the secreted. Functionally, growth factor that plays an essential role in the regulation of embryonic development, cell proliferation, cell migration, survival and chemotaxis. Potent mitogen for cells of mesenchymal origin. Plays an important role in wound healing. Induces macrophage recruitment, increased interstitial pressure, and blood vessel maturation during angiogenesis. Can initiate events that lead to a mesangial proliferative glomerulonephritis, including influx of monocytes and macrophages and production of extracellular matrix. The polypeptide is Platelet-derived growth factor D (PDGFD) (Homo sapiens (Human)).